Reading from the N-terminus, the 156-residue chain is ATP synthase subunit b (156 aa).

Residues 5-27 traverse the membrane as a helical segment; it reads ITLIGQMITFAIFVGFTMKFVWP.

It belongs to the ATPase B chain family. In terms of assembly, F-type ATPases have 2 components, F(1) - the catalytic core - and F(0) - the membrane proton channel. F(1) has five subunits: alpha(3), beta(3), gamma(1), delta(1), epsilon(1). F(0) has three main subunits: a(1), b(2) and c(10-14). The alpha and beta chains form an alternating ring which encloses part of the gamma chain. F(1) is attached to F(0) by a central stalk formed by the gamma and epsilon chains, while a peripheral stalk is formed by the delta and b chains.

Its subcellular location is the cell inner membrane. Its function is as follows. F(1)F(0) ATP synthase produces ATP from ADP in the presence of a proton or sodium gradient. F-type ATPases consist of two structural domains, F(1) containing the extramembraneous catalytic core and F(0) containing the membrane proton channel, linked together by a central stalk and a peripheral stalk. During catalysis, ATP synthesis in the catalytic domain of F(1) is coupled via a rotary mechanism of the central stalk subunits to proton translocation. Functionally, component of the F(0) channel, it forms part of the peripheral stalk, linking F(1) to F(0). In Francisella philomiragia subsp. philomiragia (strain ATCC 25017 / CCUG 19701 / FSC 153 / O#319-036), this protein is ATP synthase subunit b.